The sequence spans 270 residues: Imidazole glycerol phosphate synthase subunit HisF (270 aa).

Catalysis depends on residues D11 and D130.

This sequence belongs to the HisA/HisF family. In terms of assembly, heterodimer of HisH and HisF.

The protein resides in the cytoplasm. The catalysed reaction is 5-[(5-phospho-1-deoxy-D-ribulos-1-ylimino)methylamino]-1-(5-phospho-beta-D-ribosyl)imidazole-4-carboxamide + L-glutamine = D-erythro-1-(imidazol-4-yl)glycerol 3-phosphate + 5-amino-1-(5-phospho-beta-D-ribosyl)imidazole-4-carboxamide + L-glutamate + H(+). It participates in amino-acid biosynthesis; L-histidine biosynthesis; L-histidine from 5-phospho-alpha-D-ribose 1-diphosphate: step 5/9. In terms of biological role, IGPS catalyzes the conversion of PRFAR and glutamine to IGP, AICAR and glutamate. The HisF subunit catalyzes the cyclization activity that produces IGP and AICAR from PRFAR using the ammonia provided by the HisH subunit. In Sorangium cellulosum (strain So ce56) (Polyangium cellulosum (strain So ce56)), this protein is Imidazole glycerol phosphate synthase subunit HisF.